The sequence spans 115 residues: Large ribosomal subunit protein bL20 (115 aa).

The protein belongs to the bacterial ribosomal protein bL20 family.

Its function is as follows. Binds directly to 23S ribosomal RNA and is necessary for the in vitro assembly process of the 50S ribosomal subunit. It is not involved in the protein synthesizing functions of that subunit. The polypeptide is Large ribosomal subunit protein bL20 (Chlorobium limicola (strain DSM 245 / NBRC 103803 / 6330)).